The primary structure comprises 904 residues: Polycystin-2 (904 aa).

A disordered region spans residues 1–102 (MSSSRVRPQA…SSSGGVPGNF (102 aa)). Residues 1 to 155 (MSSSRVRPQA…NSNREMYLKT (155 aa)) lie on the Cytoplasmic side of the membrane. The span at 8-20 (PQAPQSPAASASA) shows a compositional bias: low complexity. Basic and acidic residues predominate over residues 26–38 (EGIEMEKMHHEEV). Low complexity predominate over residues 86-96 (SVSTTSSSSSG). Residues 156–177 (VLREMITYILFLLTLCIITYGM) traverse the membrane as a helical segment. Residues 178 to 404 (VSTNMYYYTK…TVRLLRYVSS (227 aa)) lie on the Extracellular side of the membrane. N-linked (GlcNAc...) asparagine glycans are attached at residues Asn-235, Asn-241, and Asn-264. The cysteines at positions 267 and 280 are disulfide-linked. The N-linked (GlcNAc...) asparagine glycan is linked to Asn-298. Residues 405 to 425 (WDYFVGMCEVSFCLFVLYYLV) traverse the membrane as a helical segment. At 426–441 (EEALEIRLHRLRYFKS) the chain is on the cytoplasmic side. A helical transmembrane segment spans residues 442-462 (LWNCLDVLIVALSVPAIIMNI). At 463–489 (CRTSAVSHRLHFLLENHSTYPNFEPLA) the chain is on the extracellular side. Residue Asn-478 is glycosylated (N-linked (GlcNAc...) asparagine). A helical membrane pass occupies residues 490–510 (RLQVHFNNLAAIIVFLSWVKL). At 511-534 (FKFINFNKTMNQLSTTMSRCAKDL) the chain is on the cytoplasmic side. Residues 535–556 (MGFAIMFFIVFLAYAQLAYLVF) form a helical membrane-spanning segment. Topologically, residues 557-568 (GTQVNDFSTFQA) are extracellular. An intramembrane region (pore-forming) is located at residues 569 to 583 (CIFTQFRIILGDFDF). Leu-578 lines the Ca(2+) pocket. The short motif at 578-580 (LGD) is the Selectivity filter element. Topologically, residues 584–591 (SEIEEADS) are extracellular. The chain crosses the membrane as a helical span at residues 592–612 (VLGPIYFTTFVFFIFMILLNM). Over 613 to 904 (FLAIINDTYS…DAAASGPAHL (292 aa)) the chain is Cytoplasmic. The EF-hand 1 domain maps to 687–722 (HSDAEIEAIFAKYDLDGDQELTEHEHQQMRDDLEKE). Asp-700, Asp-702, Asp-704, Glu-706, and Glu-711 together coordinate Ca(2+). Over residues 708-732 (TEHEHQQMRDDLEKEREDLDLEHSS) the composition is skewed to basic and acidic residues. Disordered stretches follow at residues 708–770 (TEHE…SSGG) and 854–904 (ESDD…PAHL). Residues 740–759 (RSFSRSQDDSEEDDDEDSGH) form a linker region. Residues 768–786 (SGGVSYEEFQVLVRRVDRM) enclose the EF-hand 2 domain. The stretch at 770-809 (GVSYEEFQVLVRRVDRMEHSIGSIVSKIDAVIVKLEAMER) forms a coiled coil. The segment covering 878 to 890 (LRPRSSRPPSSLS) has biased composition (low complexity).

Belongs to the polycystin family. As to quaternary structure, homotetramer. Component of the heterotetrameric polycystin channel complex with pkd1; the tetramer contains one pkd1 chain and three pkd2 chains. Interacts with pkd1l1. Post-translationally, phosphorylated. Phosphorylation is important for protein function; a mutant human construct that lacks the N-terminal phosphorylation sites cannot complement a zebrafish pkd2-deficient mutant. In terms of processing, N-glycosylated. The four subunits in a tetramer probably differ in the extent of glycosylation; simultaneous glycosylation of all experimentally validated sites would probably create steric hindrance. Sumoylated by SUMO1; sumoylation regulates PKD2 membrane recycling. As to expression, detected along cilia and at the cilium basal body in Kupffer's vesicle at the 10 somite stage. Detected in heart at 48hpf. Detected in muscle and pronephric kidney at 48 hpf. Detected on trunk muscle sarcolemma and sarcomere, on ependymal cell cilia in brain, at the apical cell membrane in epithelial cells in the ear, at the lateral line organ and olfactory placode at 56 hpf. Detected in adult kidney (at protein level).

It localises to the basolateral cell membrane. The protein localises to the cell membrane. It is found in the sarcolemma. The protein resides in the cytoplasm. Its subcellular location is the myofibril. It localises to the sarcomere. The protein localises to the sarcoplasmic reticulum membrane. It is found in the apical cell membrane. The protein resides in the endoplasmic reticulum membrane. Its subcellular location is the cell projection. It localises to the cilium. The protein localises to the cytoskeleton. It is found in the cilium basal body. The protein resides in the cytoplasmic vesicle membrane. It catalyses the reaction K(+)(in) = K(+)(out). It carries out the reaction Na(+)(in) = Na(+)(out). The enzyme catalyses Ca(2+)(in) = Ca(2+)(out). Channel activity is regulated by phosphorylation. Channel activity is regulated by intracellular Ca(2+). Functionally, forms a nonselective cation channel. Can function as a homotetrameric ion channel or can form heteromer with PKD1. Displays distinct function depending on its subcellular localization and regulation by its binding partners. In the primary cilium functions as a cation channel, with a preference for monovalent cations over divalent cations that allows K(+), Na(+) and Ca(2+) influx, with low selectivity for Ca(2+). In the endoplasmic reticulum, likely functions as a K(+) channel to facilitate Ca(2+) release. Required for normal oscillation of Ca(2+) levels within cilia; these oscillations of the intraciliary Ca(2+) levels can trigger cytoplasmic Ca(2+) signaling cascades. Required for normal temporal variation of the intracellular Ca(2+) levels in the heart. Plays a role in fluid-flow mechanosensation. Required for normal specification of the body left-right axis during embryogenesis, most likely via its role in ciliary Ca(2+) oscillations in Kupffer's vesicle. This is Polycystin-2 from Danio rerio (Zebrafish).